The chain runs to 192 residues: Cytochrome c4 (192 aa).

2 Cytochrome c domains span residues 12-90 and 99-191; these read GDPQ…ATQP and ELAS…QGLS. Positions 25, 28, 29, 120, 123, and 124 each coordinate heme c.

In terms of processing, binds 2 heme c groups covalently per subunit.

The protein localises to the periplasm. Diheme, high potential cytochrome c believed to be an intermediate electron donor in an anaerobic electron transport chain. In Thiocapsa roseopersicina, this protein is Cytochrome c4.